The chain runs to 1003 residues: MAHLQLSAVAGGGRPAAAGGGGDEMEDVRLLDSYDEEMGGGAAAAAAGEEEEAHVRVTGMTCSACTSAVEGAVSARRGVRRVAVSLLQNRAHVVFDPALLKVEDIIEAIEDAGFDAEIIPDTAISQPKAQKTLSAQFRIGGMTCANCVNSVEGILKRLSGVKGAVVALATSLGEVEYDPSVINKDEIVEAIEDAGFEAAFLQSSEQDKILLGLTGLHTERDVNVLHDILKKMIGLRQFDVNATVSEVEIIFDPEAVGLRSIVDAIETGSNGRLKAHVQNPYARGASNDAHEAAKMLHLLRSSLFLSIPVFFIRMVCPHIPFIRSILMMHCGPFHMGDLLKWILVSIVQFVVGKRFYIAAYRALRHGSTNMDVLVVLGTTASYVYSVCALLYGAFTGFHPPIYFETSAMIITFVLFGKYLEVLAKGKTSDAIKKLVELVPATALLLLKDKEGKYTEEREIDALLVQPGDILKVLPGSKVPADGVVVWGTSHVNESMITGESAPIPKEVSSAVIGGTMNLHGVLHIQANKVGSETVLSQIISLVETAQMSKAPIQKFADYVASIFVPIVITLSMITFLVWFLCGWVGAYPNSWISGTSNCFVFSLMFAIAVVVIACPCALGLATPTAVMVATGVGANHGVLVKGGDALERAQNVNYVIFDKTGTLTQGKAVVTTAKVFSGMDLGDFLTLVASAEASSEHPLAKAIVEYAFHFHFFGKLPTSKDGIEQRKEDRLSQLLLQVEDFSALPGKGVQCLINGKRVLVGNRTLVTENGVNVPPEAENFLVDLELNAKTGILVSYDDDFVGLMGITDPLKREAAVVVEGLKKMGVHPVMLTGDNWRTAKAVAKEVGIEDVRAEVMPAGKADVVRSLQKDGSIVAMVGDGINDSPALAAADVGMAIGGGTDIAIEAADYVLVRNNLEDVITAIDLSRKTFSRIRWNYFFAMAYNVVAIPVAAGALFPFTRLQMPPWLAGACMAFSSVSVVCSSLLLRRYRKPRLTTVLQITVE.

The tract at residues leucine 6–methionine 25 is disordered. The segment covering alanine 10 to glycine 22 has biased composition (gly residues). HMA domains lie at glutamate 51–glutamate 117, leucine 133–alanine 199, and aspartate 207–leucine 273. Cu cation is bound by residues cysteine 62, cysteine 65, cysteine 144, and cysteine 147. Helical transmembrane passes span serine 302–isoleucine 322, glycine 331–valine 351, valine 372–glycine 392, glycine 396–glycine 416, isoleucine 562–glycine 582, phenylalanine 599–glycine 619, phenylalanine 938–phenylalanine 958, and tryptophan 966–leucine 986.

Belongs to the cation transport ATPase (P-type) (TC 3.A.3) family. Type IB subfamily. In terms of tissue distribution, expressed in root vascular cylinder, vascular bundles and mesophyll cells of leaf blades, and anther walls and microspores of stamens.

Its subcellular location is the cell membrane. Functionally, metal efflux transporter that may play a role in detoxification of heavy metals, such as zinc, copper, lead and cadmium, especially in the shoots. The protein is Cation-transporting ATPase HMA5 of Oryza sativa subsp. japonica (Rice).